Consider the following 360-residue polypeptide: Cannabinoid receptor 2 (360 aa).

Residues 1–33 (MEECWVTEIANGSKDGLDSNPMKDYMILSGPQK) are Extracellular-facing. Asparagine 11 carries an N-linked (GlcNAc...) asparagine glycan. The chain crosses the membrane as a helical span at residues 34 to 59 (TAVAVLCTLLGLLSALENVAVLYLIL). Residues 60-71 (SSHQLRRKPSYL) are Cytoplasmic-facing. The chain crosses the membrane as a helical span at residues 72–92 (FIGSLAGADFLASVVFACSFV). Topologically, residues 93-104 (NFHVFHGVDSKA) are extracellular. The chain crosses the membrane as a helical span at residues 105–129 (VFLLKIGSVTMTFTASVGSLLLTAI). Over 130–149 (DRYLCLRYPPSYKALLTRGR) the chain is Cytoplasmic. Residues 150-172 (ALVTLGIMWVLSALVSYLPLMGW) traverse the membrane as a helical segment. At 173–188 (TCCPRPCSELFPLIPN) the chain is on the extracellular side. The chain crosses the membrane as a helical span at residues 189–214 (DYLLSWLLFIAFLFSGIIYTYGHVLW). Topologically, residues 215-246 (KAHQHVASLSGHQDRQVPGMARMRLDVRLAKT) are cytoplasmic. The chain crosses the membrane as a helical span at residues 247-267 (LGLVLAVLLICWFPVLALMAH). At 268 to 279 (SLATTLSDQVKK) the chain is on the extracellular side. Residues 280–301 (AFAFCSMLCLINSMVNPVIYAL) traverse the membrane as a helical segment. At 302-360 (RSGEIRSSAHHCLAHWKKCVRGLGSEAKEEAPRSSVTETEADGKITPWPDSRDLDLSDC) the chain is on the cytoplasmic side. Positions 327–360 (EAKEEAPRSSVTETEADGKITPWPDSRDLDLSDC) are disordered. Phosphoserine is present on residues serine 335 and serine 336. Threonine 338 bears the Phosphothreonine mark. The span at 351–360 (DSRDLDLSDC) shows a compositional bias: basic and acidic residues. Serine 352 carries the post-translational modification Phosphoserine.

This sequence belongs to the G-protein coupled receptor 1 family. Constitutively phosphorylated on Ser-352; phosphorylation increases cell internalization and desensitizes the receptor. In terms of tissue distribution, preferentially expressed in cells of the immune system with higher expression in B-cells and NK cells (at protein level). Expressed in skin in suprabasal layers and hair follicles (at protein level). Highly expressed in tonsil and to a lower extent in spleen, peripheral blood mononuclear cells, and thymus. PubMed:14657172 could not detect expression in normal brain. Expressed in brain by perivascular microglial cells and dorsal root ganglion sensory neurons (at protein level). Two isoforms are produced by alternative promoter usage and differ only in the 5' UTR: isoform CB2A is observed predominantly in testis with some expression in brain, while isoform CB2B is predominant in spleen and leukocytes.

It localises to the cell membrane. The protein resides in the cell projection. Its subcellular location is the dendrite. It is found in the perikaryon. In terms of biological role, heterotrimeric G protein-coupled receptor for endocannabinoid 2-arachidonoylglycerol mediating inhibition of adenylate cyclase. May function in inflammatory response, nociceptive transmission and bone homeostasis. The polypeptide is Cannabinoid receptor 2 (CNR2) (Homo sapiens (Human)).